The sequence spans 149 residues: Glutamyl-tRNA(Gln) amidotransferase subunit C, mitochondrial (149 aa).

Residues 1-25 constitute a mitochondrion transit peptide; the sequence is MNHLHRLFRITQVDRPVLLAITRRL.

Belongs to the GatC family. In terms of assembly, subunit of the heterotrimeric GatCAB amidotransferase (AdT) complex, composed of A, B and C subunits.

It localises to the mitochondrion. The catalysed reaction is L-glutamyl-tRNA(Gln) + L-glutamine + ATP + H2O = L-glutaminyl-tRNA(Gln) + L-glutamate + ADP + phosphate + H(+). Functionally, allows the formation of correctly charged Gln-tRNA(Gln) through the transamidation of misacylated Glu-tRNA(Gln) in the mitochondria. The reaction takes place in the presence of glutamine and ATP through an activated gamma-phospho-Glu-tRNA(Gln). The polypeptide is Glutamyl-tRNA(Gln) amidotransferase subunit C, mitochondrial (Branchiostoma floridae (Florida lancelet)).